We begin with the raw amino-acid sequence, 630 residues long: 1-deoxy-D-xylulose-5-phosphate synthase (630 aa).

Thiamine diphosphate-binding positions include H87 and 128–130 (GHS). D159 lines the Mg(2+) pocket. Residues 160 to 161 (GA), N188, F295, and E377 each bind thiamine diphosphate. Mg(2+) is bound at residue N188.

It belongs to the transketolase family. DXPS subfamily. Homodimer. Requires Mg(2+) as cofactor. Thiamine diphosphate serves as cofactor.

The enzyme catalyses D-glyceraldehyde 3-phosphate + pyruvate + H(+) = 1-deoxy-D-xylulose 5-phosphate + CO2. It participates in metabolic intermediate biosynthesis; 1-deoxy-D-xylulose 5-phosphate biosynthesis; 1-deoxy-D-xylulose 5-phosphate from D-glyceraldehyde 3-phosphate and pyruvate: step 1/1. Functionally, catalyzes the acyloin condensation reaction between C atoms 2 and 3 of pyruvate and glyceraldehyde 3-phosphate to yield 1-deoxy-D-xylulose-5-phosphate (DXP). This Pseudomonas savastanoi pv. phaseolicola (strain 1448A / Race 6) (Pseudomonas syringae pv. phaseolicola (strain 1448A / Race 6)) protein is 1-deoxy-D-xylulose-5-phosphate synthase.